The sequence spans 359 residues: tRNA/tmRNA (uracil-C(5))-methyltransferase (359 aa).

Positions 183, 211, 216, 232, and 292 each coordinate S-adenosyl-L-methionine. Cys317 functions as the Nucleophile in the catalytic mechanism. The active-site Proton acceptor is the Glu351.

This sequence belongs to the class I-like SAM-binding methyltransferase superfamily. RNA M5U methyltransferase family. TrmA subfamily.

It carries out the reaction uridine(54) in tRNA + S-adenosyl-L-methionine = 5-methyluridine(54) in tRNA + S-adenosyl-L-homocysteine + H(+). It catalyses the reaction uridine(341) in tmRNA + S-adenosyl-L-methionine = 5-methyluridine(341) in tmRNA + S-adenosyl-L-homocysteine + H(+). In terms of biological role, dual-specificity methyltransferase that catalyzes the formation of 5-methyluridine at position 54 (m5U54) in all tRNAs, and that of position 341 (m5U341) in tmRNA (transfer-mRNA). This Pseudomonas fluorescens (strain ATCC BAA-477 / NRRL B-23932 / Pf-5) protein is tRNA/tmRNA (uracil-C(5))-methyltransferase.